A 324-amino-acid polypeptide reads, in one-letter code: tRNA U34 carboxymethyltransferase (324 aa).

Residues lysine 91, tryptophan 105, lysine 110, glycine 130, 152-154 (DPS), 181-182 (IE), methionine 196, tyrosine 200, and arginine 315 contribute to the carboxy-S-adenosyl-L-methionine site.

It belongs to the class I-like SAM-binding methyltransferase superfamily. CmoB family. As to quaternary structure, homotetramer.

The catalysed reaction is carboxy-S-adenosyl-L-methionine + 5-hydroxyuridine(34) in tRNA = 5-carboxymethoxyuridine(34) in tRNA + S-adenosyl-L-homocysteine + H(+). Catalyzes carboxymethyl transfer from carboxy-S-adenosyl-L-methionine (Cx-SAM) to 5-hydroxyuridine (ho5U) to form 5-carboxymethoxyuridine (cmo5U) at position 34 in tRNAs. In Aliivibrio fischeri (strain MJ11) (Vibrio fischeri), this protein is tRNA U34 carboxymethyltransferase.